Consider the following 853-residue polypeptide: cGMP-dependent protein kinase (853 aa).

The tract at residues 1-29 (MEEDDNLKKGNERNKKKAIFSNDDFTGED) is autoinhibitory segment. CNMP-binding domain regions lie at residues 58–173 (VCST…FIDS), 176–275 (VFDM…IVLG), 295–398 (IFKQ…LGNN), and 418–517 (IFRY…LQII). Residues Lys-113, Gly-122, Glu-123, Ala-125, Arg-132, and Ser-133 each contribute to the 3',5'-cyclic GMP site. Arg-473, Gly-482, Glu-483, Ala-485, Arg-492, and Thr-493 together coordinate 3',5'-cyclic GMP. The region spanning 541-798 (LETERIIGRG…FKDIKDHPFF (258 aa)) is the Protein kinase domain. ATP-binding positions include 547–555 (IGRGTFGTV) and Lys-570. Asp-664 acts as the Proton acceptor in catalysis. In terms of domain architecture, AGC-kinase C-terminal spans 799-853 (SNFNWDKLAGRLLDPPLVSKSETYAEDIDIKQIEEEDAEDDEEPLNDEDNWDIDF). The tract at residues 827 to 853 (DIKQIEEEDAEDDEEPLNDEDNWDIDF) is disordered. Positions 832–853 (EEEDAEDDEEPLNDEDNWDIDF) are enriched in acidic residues.

Belongs to the protein kinase superfamily. AGC Ser/Thr protein kinase family. cGMP subfamily. Monomer. The cofactor is Mg(2+). In terms of processing, autophosphorylated.

It localises to the cytoplasm. The protein localises to the endoplasmic reticulum membrane. It carries out the reaction L-seryl-[protein] + ATP = O-phospho-L-seryl-[protein] + ADP + H(+). The enzyme catalyses L-threonyl-[protein] + ATP = O-phospho-L-threonyl-[protein] + ADP + H(+). With respect to regulation, activated by cGMP. Not activated by cAMP. cGMP binding allosterically triggers a conformational change at the alpha C-helix of cGMP-binding domain 4, which bridges the regulatory and catalytic domains, causing the capping triad, composed of Arg-484, Gln-532 and Asp-533, to form and stabilize the active conformation. The cGMP-binding domains acts cooperatively to activate PKG. Serine/threonine protein kinase which acts as a downstream effector of the second messenger cGMP. Controls the release of Ca(2+) from intracellular stores by regulating phosphoinositide biosynthesis. Ca(2+) signals are essential for merozoite and sporozoite invasion and egress from host hepatocytes and erythrocytes, and, in the mosquito vector, for gametocyte activation, and ookinete and sporozoite motility. During the host liver stage, regulates the initial invasion of host hepatocytes by sporozoites by regulating sporozoite motility and microneme exocytosis. Following parasite development in the hepatocytes, required for the release of merosomes, a vesicle containing the mature merozoites. During the asexual blood stage, required for the progression from schizont to the ring stage following merozoite invasion of host erythrocytes and for merozoite egress. Regulates merozoite egress by promoting the release of exonemes and micronemes which contain proteins essential for egress. Phosphorylates CDPK1 predominantly at the late schizont stage; phosphorylation at 'Ser-64' regulates CDPK1 protein-protein interaction and phosphorylation at 'Thr-231' may regulate CDPK1 kinase activity. In the mosquito vector, required for the initiation of gametogenesis induced by xanthurenic acid, specifically the gametocyte differentiation from the crescent-shaped form to the spherical form. Required for the gliding motility of ookinetes to reach and penetrate the midgut epithelium by promoting Ca(2+)-mediated activation of CDPK1 and CDPK4. Also required for microneme secretion in ookinete by promoting Ca(2+)-mediated activation of CDPK3. The protein is cGMP-dependent protein kinase of Plasmodium falciparum (isolate NF54).